The sequence spans 52 residues: ATP synthase protein 8 (52 aa).

The chain crosses the membrane as a helical span at residues 10–30 (FLMSLMIMMILIFMTINFYFF).

The protein belongs to the ATPase protein 8 family. F-type ATPases have 2 components, CF(1) - the catalytic core - and CF(0) - the membrane proton channel.

The protein localises to the mitochondrion membrane. Its function is as follows. Mitochondrial membrane ATP synthase (F(1)F(0) ATP synthase or Complex V) produces ATP from ADP in the presence of a proton gradient across the membrane which is generated by electron transport complexes of the respiratory chain. F-type ATPases consist of two structural domains, F(1) - containing the extramembraneous catalytic core and F(0) - containing the membrane proton channel, linked together by a central stalk and a peripheral stalk. During catalysis, ATP synthesis in the catalytic domain of F(1) is coupled via a rotary mechanism of the central stalk subunits to proton translocation. Part of the complex F(0) domain. Minor subunit located with subunit a in the membrane. This Rhipicephalus sanguineus (Brown dog tick) protein is ATP synthase protein 8 (MT-ATP8).